The chain runs to 188 residues: Crossover junction endodeoxyribonuclease RuvC (188 aa).

Active-site residues include Asp14, Glu74, and Asp149. Residues Asp14, Glu74, and Asp149 each contribute to the Mg(2+) site.

It belongs to the RuvC family. Homodimer which binds Holliday junction (HJ) DNA. The HJ becomes 2-fold symmetrical on binding to RuvC with unstacked arms; it has a different conformation from HJ DNA in complex with RuvA. In the full resolvosome a probable DNA-RuvA(4)-RuvB(12)-RuvC(2) complex forms which resolves the HJ. It depends on Mg(2+) as a cofactor.

The protein localises to the cytoplasm. It catalyses the reaction Endonucleolytic cleavage at a junction such as a reciprocal single-stranded crossover between two homologous DNA duplexes (Holliday junction).. The RuvA-RuvB-RuvC complex processes Holliday junction (HJ) DNA during genetic recombination and DNA repair. Endonuclease that resolves HJ intermediates. Cleaves cruciform DNA by making single-stranded nicks across the HJ at symmetrical positions within the homologous arms, yielding a 5'-phosphate and a 3'-hydroxyl group; requires a central core of homology in the junction. The consensus cleavage sequence is 5'-(A/T)TT(C/G)-3'. Cleavage occurs on the 3'-side of the TT dinucleotide at the point of strand exchange. HJ branch migration catalyzed by RuvA-RuvB allows RuvC to scan DNA until it finds its consensus sequence, where it cleaves and resolves the cruciform DNA. The protein is Crossover junction endodeoxyribonuclease RuvC of Bacteroides fragilis (strain ATCC 25285 / DSM 2151 / CCUG 4856 / JCM 11019 / LMG 10263 / NCTC 9343 / Onslow / VPI 2553 / EN-2).